The following is a 66-amino-acid chain: Toxin Aah6 (66 aa).

The 64-residue stretch at arginine 2–serine 65 folds into the LCN-type CS-alpha/beta domain. Asparagine 9 carries N-linked (GlcNAc...) asparagine glycosylation. 4 disulfide bridges follow: cysteine 13–cysteine 64, cysteine 17–cysteine 40, cysteine 26–cysteine 45, and cysteine 30–cysteine 47.

It belongs to the long (4 C-C) scorpion toxin superfamily. Sodium channel inhibitor family. Beta subfamily. In terms of processing, N-glycans are core-fucosylated, heterogeneous and short which could be the result of extensive trimming. As to expression, expressed by the venom gland.

The protein localises to the secreted. Its function is as follows. Beta toxins bind voltage-independently at site-4 of sodium channels and shift the voltage of activation toward more negative potentials thereby affecting sodium channel activation and promoting spontaneous and repetitive firing. This toxin is active only on insects. This toxin has very low anti-insect activity. This Androctonus australis (Sahara scorpion) protein is Toxin Aah6.